The sequence spans 387 residues: MRILKSHPLLKIVNSYIIDSPQPANLSYLWNFGSLLALCLGIQIVTGVTLAMHYTPSVSEAFNSVEHIMRDVNNGWLVRYLHSNTASAFFFLVYLHIGRGLYYGSYKTPRTLTWAIGTVILIVMMATAFLGYVLPYGQMSLWGATVITNLMSAIPWIGQDIVEFIWGGFSVNNATLNRFFALHFLLPFVLAALALMHLIAMHDTVGSGNPLGISANYDRLPFAPYFIFKDLITIFIFFIVLSIFVFFMPNALGDSENYVMANPMQTPPAIVPEWYLLPFYAILRSIPNKLLGVIAMFAAILALMVMPITDLSKLRGVQFRPLSKVVFYIFVANFLILMQIGAKHVETPFIEFGQISTIIYFAYFFVIVPVVSLIENTLVELGTKKNF.

The next 4 helical transmembrane spans lie at 32 to 52 (FGSL…TLAM), 76 to 98 (WLVR…LHIG), 113 to 133 (TWAI…LGYV), and 179 to 199 (FFAL…MHLI). H82 and H96 together coordinate heme b. Positions 183 and 197 each coordinate heme b. H202 is an a ubiquinone binding site. 4 helical membrane passes run 226-246 (FIFK…IFVF), 290-310 (LLGV…PITD), 322-342 (LSKV…QIGA), and 349-369 (FIEF…VIVP).

This sequence belongs to the cytochrome b family. In terms of assembly, fungal cytochrome b-c1 complex contains 10 subunits; 3 respiratory subunits, 2 core proteins and 5 low-molecular weight proteins. Cytochrome b-c1 complex is a homodimer. The cofactor is heme b.

It localises to the mitochondrion inner membrane. Functionally, component of the ubiquinol-cytochrome c reductase complex (complex III or cytochrome b-c1 complex) that is part of the mitochondrial respiratory chain. The b-c1 complex mediates electron transfer from ubiquinol to cytochrome c. Contributes to the generation of a proton gradient across the mitochondrial membrane that is then used for ATP synthesis. The protein is Cytochrome b (cob) of Emericella nidulans (Aspergillus nidulans).